The primary structure comprises 903 residues: Protein translocase subunit SecA (903 aa).

ATP-binding positions include glutamine 87, 105 to 109, and aspartate 512; that span reads GEGKT. Residues 853 to 903 form a disordered region; the sequence is KQQQLSHYEENALVTEDPNAPATAERKVGRNDPCPCGSGKKYKQCHGRLQS. Zn(2+)-binding residues include cysteine 886, cysteine 888, cysteine 897, and histidine 898. Over residues 892–903 the composition is skewed to basic residues; the sequence is KKYKQCHGRLQS.

Belongs to the SecA family. In terms of assembly, monomer and homodimer. Part of the essential Sec protein translocation apparatus which comprises SecA, SecYEG and auxiliary proteins SecDF-YajC and YidC. Zn(2+) serves as cofactor.

It is found in the cell inner membrane. The protein resides in the cytoplasm. The enzyme catalyses ATP + H2O + cellular proteinSide 1 = ADP + phosphate + cellular proteinSide 2.. In terms of biological role, part of the Sec protein translocase complex. Interacts with the SecYEG preprotein conducting channel. Has a central role in coupling the hydrolysis of ATP to the transfer of proteins into and across the cell membrane, serving both as a receptor for the preprotein-SecB complex and as an ATP-driven molecular motor driving the stepwise translocation of polypeptide chains across the membrane. The protein is Protein translocase subunit SecA of Serratia proteamaculans (strain 568).